The primary structure comprises 121 residues: Probable V-type proton ATPase subunit F (121 aa).

This sequence belongs to the V-ATPase F subunit family. As to quaternary structure, V-ATPase is a heteromultimeric enzyme made up of two complexes: the ATP-hydrolytic V1 complex and the proton translocation V0 complex. The V1 complex consists of three catalytic AB heterodimers that form a heterohexamer, three peripheral stalks each consisting of EG heterodimers, one central rotor including subunits D and F, and the regulatory subunits C and H. The proton translocation complex V0 consists of the proton transport subunit a, a ring of proteolipid subunits c9c'', rotary subunit d, subunits e and f, and the accessory subunits vah-19/Ac45 and vah-20/PRR.

Its function is as follows. Subunit of the V1 complex of vacuolar(H+)-ATPase (V-ATPase), a multisubunit enzyme composed of a peripheral complex (V1) that hydrolyzes ATP and a membrane integral complex (V0) that translocates protons. V-ATPase is responsible for acidifying and maintaining the pH of intracellular compartments and in some cell types, is targeted to the plasma membrane, where it is responsible for acidifying the extracellular environment. Required along with other vacuolar ATPase components for the removal of protein aggregates which form in immature oocytes in the distal gonad. This removal occurs as the oocytes mature and move to the proximal gonad, is triggered by the introduction of sperm through mating and occurs before fertilization. The introduction of sperm triggers V-ATPase accumulation in proximal oocytes and induces lysosomal acidification which leads to engulfing of protein aggregates by lysosomes and subsequent clearance of the aggregates. Lysosomal acidification also leads to changes in mitochondrial morphology and function. Mitochondria in distal immature oocytes are fragmented, produce high levels of reactive oxygen species (ROS) and have high membrane potential, indicative of metabolic inactivity. In contrast, mitochondria in proximal mature oocytes are tubular with lower ROS levels and membrane potential, indicative of an active metabolic state required for aggregate mobilization before clearance. This Caenorhabditis elegans protein is Probable V-type proton ATPase subunit F.